The following is a 924-amino-acid chain: MDYKETLLMPQTEFPMRGNLPKREPEMQKKWEEMDIYRKVQERTKGRPLFVLHDGPPYANGDIHMGHALNKILKDIIVRYKSMSGFCAPYVPGWDTHGLPIETALTKQGVDRKSMSVAEFRKLCEQYAYEQIDNQRQQFKRLGVRGDWDNPYITLKPEYEAQQIKVFGEMAKKGLIYKGLKPVYWSPSSESALAEAEIEYKDKRSPSIYVAFPVKDGKGVLQGDERIVIWTTTPWTIPANLAIAVHPDLDYYIVEANGQKYVVAAALAESVAKEVGWEAWSVVKTVKGKELEYVVAKHPFYERDSLVVCGEHVTTDAGTGCVHTAPGHGEDDFIVGQKYGLPVLCPVDERGYMTEEAPGFAGMFYDEANKAITQKLEEVGALLKLSFITHSYPHDWRTKQPTIFRATTQWFASIDKIRDQLLDAIKETKWVPEWGEIRIHNMVRDRGDWCISRQRAWGVPIPVFYGENGEPIITDETIEHVSNLFRQYGSNVWFEREAKDLLPEGFTHPSSPNGLFTKETDIMDVWFDSGSSHQAVLVERDDLERPADLYLEGSDQYRGWFNSSLSTAVAVTGKAPYKGVLSHGFVLDGEGRKMSKSLGNVVVPAKVMEQLGADILRLWVASVDYQADVRISDNILKQVSEVYRKIRNTFRFMLGNLFDFDPNQNAVPVGELGELDRYMLAKLNKLIAKVKKAYDSYDFAAVYHEMNHFCTVELSAFYLDMAKDILYIEAADCRARRAVQTVLYETVVALAKLIAPILPHTADEVWEHIPNRKEQVESVQLTDMPEPMAIDGEEALLAKWDAFMDVRDDILKALENARNEKVIGKSLTASVTVYPKDEVRALLASINEDLRQLLIVSAFSVADESYDAAPAEAERLNHVAVIVRPAEGETCERCWTVTPDVGRDESHPTLCPRCAHIVNEHYSA.

The short motif at 57–67 is the 'HIGH' region element; the sequence is PYANGDIHMGH. Residue E552 coordinates L-isoleucyl-5'-AMP. Positions 593-597 match the 'KMSKS' region motif; that stretch reads KMSKS. Residue K596 participates in ATP binding. Residues C891, C894, C911, and C914 each coordinate Zn(2+).

This sequence belongs to the class-I aminoacyl-tRNA synthetase family. IleS type 1 subfamily. As to quaternary structure, monomer. Requires Zn(2+) as cofactor.

The protein resides in the cytoplasm. The catalysed reaction is tRNA(Ile) + L-isoleucine + ATP = L-isoleucyl-tRNA(Ile) + AMP + diphosphate. Its function is as follows. Catalyzes the attachment of isoleucine to tRNA(Ile). As IleRS can inadvertently accommodate and process structurally similar amino acids such as valine, to avoid such errors it has two additional distinct tRNA(Ile)-dependent editing activities. One activity is designated as 'pretransfer' editing and involves the hydrolysis of activated Val-AMP. The other activity is designated 'posttransfer' editing and involves deacylation of mischarged Val-tRNA(Ile). The sequence is that of Isoleucine--tRNA ligase from Geobacillus thermodenitrificans (strain NG80-2).